Here is a 147-residue protein sequence, read N- to C-terminus: uncharacterized protein (147 aa).

The chain crosses the membrane as a helical span at residues 63-79 (LFIVACSAVFATIAYIN).

It belongs to the FUN14 family.

It localises to the membrane. This is an uncharacterized protein from Schizosaccharomyces pombe (strain 972 / ATCC 24843) (Fission yeast).